The sequence spans 84 residues: Small ribosomal subunit protein bS16 (84 aa).

Belongs to the bacterial ribosomal protein bS16 family.

In Ralstonia pickettii (strain 12J), this protein is Small ribosomal subunit protein bS16.